A 754-amino-acid polypeptide reads, in one-letter code: Carbon catabolite repressor protein 4 homolog 6 (754 aa).

Disordered regions lie at residues 34 to 65 and 85 to 176; these read PYRG…DQFV and EPYR…KTPP. The span at 50 to 61 shows a compositional bias: basic and acidic residues; it reads FSDRPYNDDAGR. Composition is skewed to polar residues over residues 96–106 and 116–133; these read QRQQPPFNQNY and GQWQ…NQNY. Positions 162 to 171 are enriched in basic and acidic residues; it reads KPSDYREWEY. E237 is a Mg(2+) binding site. 2 disordered regions span residues 404 to 431 and 494 to 558; these read VSAE…QGQV and IENR…DQDI. 3 stretches are compositionally biased toward polar residues: residues 415-431, 503-525, and 534-545; these read NYTT…QGQV, GNLS…QHAS, and DRSVSSGLSETE.

The protein belongs to the CCR4/nocturin family. Component of the CCR4-NOT complex, at least composed of CRR4 and CAF1 proteins. Requires Mg(2+) as cofactor.

The protein localises to the nucleus. Its subcellular location is the cytoplasm. It carries out the reaction Exonucleolytic cleavage of poly(A) to 5'-AMP.. Its function is as follows. Acts as a catalytic component of the CCR4-NOT core complex, which in the nucleus seems to be a general transcription factor, and in the cytoplasm the major mRNA deadenylase involved in mRNA turnover. The polypeptide is Carbon catabolite repressor protein 4 homolog 6 (CCR4-6) (Arabidopsis thaliana (Mouse-ear cress)).